The sequence spans 136 residues: MIVGIGSDLCDIRRIARTLERHGARFTHRVFTDGERARCDRRAARAEGYARRFAAKEACAKALGTGLSAGVFWRDMEVVNLPSGQPTLRLAGGAAERLAELLPAGHAARLHVSLTDDPPMAQAFVIIEALPVSVAG.

Positions 8 and 57 each coordinate Mg(2+).

This sequence belongs to the P-Pant transferase superfamily. AcpS family. Requires Mg(2+) as cofactor.

Its subcellular location is the cytoplasm. The catalysed reaction is apo-[ACP] + CoA = holo-[ACP] + adenosine 3',5'-bisphosphate + H(+). Its function is as follows. Transfers the 4'-phosphopantetheine moiety from coenzyme A to a Ser of acyl-carrier-protein. The chain is Holo-[acyl-carrier-protein] synthase from Methylobacterium radiotolerans (strain ATCC 27329 / DSM 1819 / JCM 2831 / NBRC 15690 / NCIMB 10815 / 0-1).